A 322-amino-acid polypeptide reads, in one-letter code: N-acetyl-gamma-glutamyl-phosphate reductase (322 aa).

The active site involves Cys-132.

It belongs to the NAGSA dehydrogenase family. Type 1 subfamily.

Its subcellular location is the cytoplasm. It catalyses the reaction N-acetyl-L-glutamate 5-semialdehyde + phosphate + NADP(+) = N-acetyl-L-glutamyl 5-phosphate + NADPH + H(+). Its pathway is amino-acid biosynthesis; L-arginine biosynthesis; N(2)-acetyl-L-ornithine from L-glutamate: step 3/4. In terms of biological role, catalyzes the NADPH-dependent reduction of N-acetyl-5-glutamyl phosphate to yield N-acetyl-L-glutamate 5-semialdehyde. This is N-acetyl-gamma-glutamyl-phosphate reductase from Phocaeicola vulgatus (strain ATCC 8482 / DSM 1447 / JCM 5826 / CCUG 4940 / NBRC 14291 / NCTC 11154) (Bacteroides vulgatus).